The chain runs to 302 residues: Sulfate adenylyltransferase subunit 2 (302 aa).

Belongs to the PAPS reductase family. CysD subfamily. In terms of assembly, heterodimer composed of CysD, the smaller subunit, and CysN.

The enzyme catalyses sulfate + ATP + H(+) = adenosine 5'-phosphosulfate + diphosphate. The protein operates within sulfur metabolism; hydrogen sulfide biosynthesis; sulfite from sulfate: step 1/3. With CysN forms the ATP sulfurylase (ATPS) that catalyzes the adenylation of sulfate producing adenosine 5'-phosphosulfate (APS) and diphosphate, the first enzymatic step in sulfur assimilation pathway. APS synthesis involves the formation of a high-energy phosphoric-sulfuric acid anhydride bond driven by GTP hydrolysis by CysN coupled to ATP hydrolysis by CysD. The protein is Sulfate adenylyltransferase subunit 2 of Aeromonas hydrophila subsp. hydrophila (strain ATCC 7966 / DSM 30187 / BCRC 13018 / CCUG 14551 / JCM 1027 / KCTC 2358 / NCIMB 9240 / NCTC 8049).